Consider the following 344-residue polypeptide: Ribosomal RNA large subunit methyltransferase Cfr (344 aa).

Glutamate 90 (proton acceptor) is an active-site residue. The Radical SAM core domain maps to 97-330 (KQGWESFCIS…ATVRTQFGSE (234 aa)). A disulfide bond links cysteine 104 and cysteine 335. [4Fe-4S] cluster contacts are provided by cysteine 111, cysteine 115, and cysteine 118. Residues 157–158 (GE), serine 188, 211–213 (SLH), and asparagine 292 each bind S-adenosyl-L-methionine. Cysteine 335 serves as the catalytic S-methylcysteine intermediate.

Belongs to the radical SAM superfamily. RlmN family. Cfr subfamily. It depends on [4Fe-4S] cluster as a cofactor.

It is found in the cytoplasm. The catalysed reaction is adenosine(2503) in 23S rRNA + 2 reduced [2Fe-2S]-[ferredoxin] + 2 S-adenosyl-L-methionine = 8-methyladenosine(2503) in 23S rRNA + 5'-deoxyadenosine + L-methionine + 2 oxidized [2Fe-2S]-[ferredoxin] + S-adenosyl-L-homocysteine. In terms of biological role, specifically methylates position 8 of adenine 2503 in 23S rRNA. Confers resistance to some classes of antibiotics. This is Ribosomal RNA large subunit methyltransferase Cfr from Clostridium botulinum (strain Hall / ATCC 3502 / NCTC 13319 / Type A).